The following is a 244-amino-acid chain: Claudin-12 (244 aa).

Residues 1–10 (MGCRDVHAAT) lie on the Cytoplasmic side of the membrane. A helical transmembrane segment spans residues 11 to 31 (VLSFLCGIASVAGLFAGTLLP). The Extracellular segment spans residues 32–87 (NWRKLRLITFNRNEKNLTIYTGLWVKCARYDGSSDCLMYDRTWYLSVDQLDLRVLQ). The helical transmembrane segment at 88 to 108 (FALPLSIVIAMGALLLCLIGM) threads the bilayer. The Cytoplasmic portion of the chain corresponds to 109–135 (CNTAFNSSVPNIKLAKCLVNSAGCHLV). A helical transmembrane segment spans residues 136 to 156 (AGLLFFLAGTVSLSPSIWAIF). The Extracellular segment spans residues 157-174 (YNSHLNRKFEPVFTFDYA). A helical transmembrane segment spans residues 175–195 (VFVTIASSGGLFMTALLLFVW). Residues 196 to 244 (YCACKSLSSPFWQPLYSHAPGMHTYSQPYSSRSRLSAIEIDIPVVSHST) are Cytoplasmic-facing. 2 positions are modified to phosphoserine: S228 and S231.

This sequence belongs to the claudin family. Interacts with OCLN.

It localises to the cell junction. It is found in the tight junction. Its subcellular location is the cell membrane. Functionally, plays a major role in tight junction-specific obliteration of the intercellular space, through calcium-independent cell-adhesion activity. This Mus musculus (Mouse) protein is Claudin-12 (Cldn12).